The primary structure comprises 198 residues: 3-isopropylmalate dehydratase small subunit (198 aa).

It belongs to the LeuD family. LeuD type 1 subfamily. In terms of assembly, heterodimer of LeuC and LeuD.

It carries out the reaction (2R,3S)-3-isopropylmalate = (2S)-2-isopropylmalate. The protein operates within amino-acid biosynthesis; L-leucine biosynthesis; L-leucine from 3-methyl-2-oxobutanoate: step 2/4. Functionally, catalyzes the isomerization between 2-isopropylmalate and 3-isopropylmalate, via the formation of 2-isopropylmaleate. The protein is 3-isopropylmalate dehydratase small subunit of Mycolicibacterium paratuberculosis (strain ATCC BAA-968 / K-10) (Mycobacterium paratuberculosis).